Here is a 1134-residue protein sequence, read N- to C-terminus: RNA-binding protein NAB6 (1134 aa).

Residue Ser2 is modified to N-acetylserine. Disordered regions lie at residues 112–133 (RPVS…NTNN), 151–173 (RNNN…RNNS), and 464–491 (SVPS…SGIT). Composition is skewed to low complexity over residues 115 to 133 (SNHN…NTNN) and 151 to 164 (RNNN…HNNN). Residues Ser464 and Ser467 each carry the phosphoserine modification. The span at 471-489 (GNNNDSNNNGNNNKSNMSG) shows a compositional bias: low complexity. Residues 653 to 726 (RTIYIGNINP…NMLRVGWGHY (74 aa)) enclose the RRM domain. 2 disordered regions span residues 918 to 959 (LDAH…FGGL) and 1043 to 1092 (NYRS…GSFA). The segment covering 1057-1081 (STLSYNHSKNNETPMQDIFTNGETA) has biased composition (polar residues). Residues 1083–1092 (NRKKKRGSFA) show a composition bias toward basic residues.

The protein resides in the cytoplasm. RNA-binding protein that associates with mRNAs encoding cell wall proteins. The protein is RNA-binding protein NAB6 (NAB6) of Saccharomyces cerevisiae (strain ATCC 204508 / S288c) (Baker's yeast).